Reading from the N-terminus, the 269-residue chain is Protein-L-isoaspartate O-methyltransferase (269 aa).

The tract at residues 1–53 (MSAGQRPAPKFPLRLDQVKPAGRSGAAPLLRPQRPLHQAATERGRGTTPAGLG) is disordered. Ser-113 is a catalytic residue.

The protein belongs to the methyltransferase superfamily. L-isoaspartyl/D-aspartyl protein methyltransferase family.

Its subcellular location is the cytoplasm. The catalysed reaction is [protein]-L-isoaspartate + S-adenosyl-L-methionine = [protein]-L-isoaspartate alpha-methyl ester + S-adenosyl-L-homocysteine. Its function is as follows. Catalyzes the methyl esterification of L-isoaspartyl residues in peptides and proteins that result from spontaneous decomposition of normal L-aspartyl and L-asparaginyl residues. It plays a role in the repair and/or degradation of damaged proteins. The protein is Protein-L-isoaspartate O-methyltransferase of Methylibium petroleiphilum (strain ATCC BAA-1232 / LMG 22953 / PM1).